A 438-amino-acid polypeptide reads, in one-letter code: Glutamyl-tRNA reductase (438 aa).

Substrate is bound by residues 49–52 (TCNR), S109, 114–116 (EGQ), and Q120. C50 functions as the Nucleophile in the catalytic mechanism. 198–203 (GAGRMS) is a binding site for NADP(+).

Belongs to the glutamyl-tRNA reductase family. As to quaternary structure, homodimer.

It catalyses the reaction (S)-4-amino-5-oxopentanoate + tRNA(Glu) + NADP(+) = L-glutamyl-tRNA(Glu) + NADPH + H(+). It functions in the pathway porphyrin-containing compound metabolism; protoporphyrin-IX biosynthesis; 5-aminolevulinate from L-glutamyl-tRNA(Glu): step 1/2. It participates in porphyrin-containing compound metabolism; chlorophyll biosynthesis. Catalyzes the NADPH-dependent reduction of glutamyl-tRNA(Glu) to glutamate 1-semialdehyde (GSA). In Synechococcus sp. (strain WH7803), this protein is Glutamyl-tRNA reductase.